The chain runs to 347 residues: NADH-ubiquinone oxidoreductase chain 2 (347 aa).

10 helical membrane passes run 1-21, 25-45, 67-87, 111-131, 144-164, 178-198, 201-221, 237-257, 274-294, and 326-346; these read MNPL…LIVM, HWFM…PLLT, SMLL…WSIM, FHFW…LILL, MIMP…SIAI, IMAY…AYNP, TLLN…LLMI, LPLI…LPPL, SSII…YFYT, and LPLM…MPIL.

The protein belongs to the complex I subunit 2 family. As to quaternary structure, core subunit of respiratory chain NADH dehydrogenase (Complex I) which is composed of 45 different subunits. Interacts with TMEM242.

Its subcellular location is the mitochondrion inner membrane. The catalysed reaction is a ubiquinone + NADH + 5 H(+)(in) = a ubiquinol + NAD(+) + 4 H(+)(out). Core subunit of the mitochondrial membrane respiratory chain NADH dehydrogenase (Complex I) which catalyzes electron transfer from NADH through the respiratory chain, using ubiquinone as an electron acceptor. Essential for the catalytic activity and assembly of complex I. This is NADH-ubiquinone oxidoreductase chain 2 from Myotis simus (Velvety myotis).